Consider the following 340-residue polypeptide: Cathepsin S (340 aa).

Residues 1–17 (MRAPGHAAIRWLFWMPL) form the signal peptide. A propeptide spans 18–122 (VCSVAMEQLQ…VTFRSYSNRT (105 aa)) (activation peptide). An N-linked (GlcNAc...) asparagine glycan is attached at N120. Cystine bridges form between C134–C233, C144–C189, C178–C222, and C281–C329. C147 is an active-site residue. Catalysis depends on residues H287 and N307.

It belongs to the peptidase C1 family. In terms of tissue distribution, widely expressed with highest expression found in non-skeletal tissues. Relatively high levels found in skeletal tissues. Expressed in spleen, B cells, dendritic cells and macrophages.

It is found in the lysosome. It localises to the secreted. The protein localises to the cytoplasmic vesicle. Its subcellular location is the phagosome. It catalyses the reaction Similar to cathepsin L, but with much less activity on Z-Phe-Arg-|-NHMec, and more activity on the Z-Val-Val-Arg-|-Xaa compound.. In terms of biological role, thiol protease. Key protease responsible for the removal of the invariant chain from MHC class II molecules and MHC class II antigen presentation. The bond-specificity of this proteinase is in part similar to the specificities of cathepsin L. This chain is Cathepsin S (Ctss), found in Mus musculus (Mouse).